A 116-amino-acid polypeptide reads, in one-letter code: MVGGEASAAVEKLVSGVRQAADFAEQFRSYSESEKQWKARMEFILRHLPDYRDPPDGGGRLDQLLSLSMVWANHLFLGCSYNKDLLDKVMEMADGIEVEDLPQFTTRSELMRKHQS.

Residue methionine 1 is modified to N-acetylmethionine. Residues 24–116 (AEQFRSYSES…RSELMRKHQS (93 aa)) form the XRN2-binding (XTBD) domain.

Belongs to the CARF family. Interacts with XRN2; the interaction is direct.

This chain is CDKN2AIP N-terminal-like protein (Cdkn2aipnl), found in Mus musculus (Mouse).